Reading from the N-terminus, the 368-residue chain is MKNVGFIGWRGMVGSVLMQRMVEERDFDAIRPVFFSTSQFGQAAPTFGDTSTGTLQDAFDLDALKALDIIVTCQGGDYTNEIYPKLRESGWQGYWIDAASTLRMKDDAIIILDPVNQDVITDGLNNGVKTFVGGNCTVSLMLMSLGGLFAHNLVDWVSVATYQAASGGGARHMRELLTQMGQLYGHVADELATPSSAILDIERKVTALTRSGELPVDNFGVPLAGSLIPWIDKQLDNGQSREEWKGQAETNKILNTASVIPVDGLCVRVGALRCHSQAFTIKLKKEVSIPTVEELLAAHNPWAKVVPNDRDITMRELTPAAVTGTLTTPVGRLRKLNMGPEFLSAFTVGDQLLWGAAEPLRRMLRQLA.

NADP(+)-binding positions include 10-13, 37-38, and glutamine 74; these read RGMV and TS. Arginine 103 contacts phosphate. The active-site Acyl-thioester intermediate is the cysteine 136. S-cysteinyl cysteine; in inhibited form is present on cysteine 136. Substrate is bound at residue glutamine 163. Residues 166-167 and proline 194 each bind NADP(+); that span reads SG. Glutamate 242 is a binding site for substrate. Lysine 245 contacts phosphate. Arginine 268 provides a ligand contact to substrate. The Proton acceptor role is filled by histidine 275. Glutamine 351 is a binding site for NADP(+).

It belongs to the aspartate-semialdehyde dehydrogenase family. Homodimer.

It catalyses the reaction L-aspartate 4-semialdehyde + phosphate + NADP(+) = 4-phospho-L-aspartate + NADPH + H(+). It functions in the pathway amino-acid biosynthesis; L-lysine biosynthesis via DAP pathway; (S)-tetrahydrodipicolinate from L-aspartate: step 2/4. The protein operates within amino-acid biosynthesis; L-methionine biosynthesis via de novo pathway; L-homoserine from L-aspartate: step 2/3. It participates in amino-acid biosynthesis; L-threonine biosynthesis; L-threonine from L-aspartate: step 2/5. Catalyzes the NADPH-dependent formation of L-aspartate-semialdehyde (L-ASA) by the reductive dephosphorylation of L-aspartyl-4-phosphate. The polypeptide is Aspartate-semialdehyde dehydrogenase (Salmonella typhi).